A 645-amino-acid chain; its full sequence is DNA ligase (645 aa).

Residues 30 to 34 (DDEYD), 79 to 80 (SM), and Glu106 contribute to the NAD(+) site. Lys108 (N6-AMP-lysine intermediate) is an active-site residue. The NAD(+) site is built by Arg129, Glu163, and Lys302. Residues Cys396, Cys399, Cys412, and Cys417 each contribute to the Zn(2+) site. Residues 570-645 (LKTNIFSGKT…IDESEYESLK (76 aa)) enclose the BRCT domain.

Belongs to the NAD-dependent DNA ligase family. LigA subfamily. Requires Mg(2+) as cofactor. It depends on Mn(2+) as a cofactor.

It carries out the reaction NAD(+) + (deoxyribonucleotide)n-3'-hydroxyl + 5'-phospho-(deoxyribonucleotide)m = (deoxyribonucleotide)n+m + AMP + beta-nicotinamide D-nucleotide.. Its function is as follows. DNA ligase that catalyzes the formation of phosphodiester linkages between 5'-phosphoryl and 3'-hydroxyl groups in double-stranded DNA using NAD as a coenzyme and as the energy source for the reaction. It is essential for DNA replication and repair of damaged DNA. This is DNA ligase from Campylobacter fetus subsp. fetus (strain 82-40).